The sequence spans 465 residues: UDP-N-acetylmuramate--L-alanine ligase (465 aa).

115–121 (GAHGKTT) provides a ligand contact to ATP.

Belongs to the MurCDEF family.

It localises to the cytoplasm. It carries out the reaction UDP-N-acetyl-alpha-D-muramate + L-alanine + ATP = UDP-N-acetyl-alpha-D-muramoyl-L-alanine + ADP + phosphate + H(+). It participates in cell wall biogenesis; peptidoglycan biosynthesis. Cell wall formation. This chain is UDP-N-acetylmuramate--L-alanine ligase, found in Coxiella burnetii (strain CbuK_Q154) (Coxiella burnetii (strain Q154)).